The primary structure comprises 164 residues: Cytochrome c-type biogenesis protein CcmE (164 aa).

At 1-8 (MNPRRKKR) the chain is on the cytoplasmic side. A helical; Signal-anchor for type II membrane protein transmembrane segment spans residues 9–29 (LTLAVALIGGVAAIASLLLYA). Over 30 to 164 (LNSNLNLFFT…EDQSKAGGYK (135 aa)) the chain is Periplasmic. 2 residues coordinate heme: histidine 131 and tyrosine 135. The segment at 140 to 164 (VAEAMGQSHEKLDYSEDQSKAGGYK) is disordered. The segment covering 147-158 (SHEKLDYSEDQS) has biased composition (basic and acidic residues).

It belongs to the CcmE/CycJ family.

Its subcellular location is the cell inner membrane. Heme chaperone required for the biogenesis of c-type cytochromes. Transiently binds heme delivered by CcmC and transfers the heme to apo-cytochromes in a process facilitated by CcmF and CcmH. In Shewanella piezotolerans (strain WP3 / JCM 13877), this protein is Cytochrome c-type biogenesis protein CcmE.